Here is a 310-residue protein sequence, read N- to C-terminus: MAKVNGETLDIMIEQSDQPTFKDYVTLAKMGIVRANLITVFAGYVVAASYLTDDVLLYLWQTKLTLLWTLLGSGLVIAGSCYLNNYIDRDIDYKMERTMGRPSVTGKMDGQRILALGLGILATGTVLLLIVNHVAAVFGLIGSFVYVVIYTMWLKRTHTINTVVGGISGAVPPIIGFAAVTPTLHIDAWILFLIMFVWQPPHFLALAMRRTEEYRAAGIPMLPVVNGFAITKRQIVWWIAVLLPSSLLLAHYGIIYMLVMAVLGGYWLYMGLKGLKIKEEQAEIKWASKMFFFSLFYFTAWIVTVVLVSL.

The next 9 membrane-spanning stretches (helical) occupy residues 37–57 (LITVFAGYVVAASYLTDDVLL), 64–84 (LTLLWTLLGSGLVIAGSCYLN), 113–133 (ILALGLGILATGTVLLLIVNH), 134–154 (VAAVFGLIGSFVYVVIYTMWL), 159–181 (TINTVVGGISGAVPPIIGFAAVT), 186–208 (IDAWILFLIMFVWQPPHFLALAM), 215–237 (RAAGIPMLPVVNGFAITKRQIVW), 257–277 (MLVMAVLGGYWLYMGLKGLKI), and 290–310 (MFFFSLFYFTAWIVTVVLVSL).

Belongs to the UbiA prenyltransferase family. Protoheme IX farnesyltransferase subfamily. Interacts with CtaA.

The protein resides in the cell membrane. The enzyme catalyses heme b + (2E,6E)-farnesyl diphosphate + H2O = Fe(II)-heme o + diphosphate. The protein operates within porphyrin-containing compound metabolism; heme O biosynthesis; heme O from protoheme: step 1/1. In terms of biological role, converts heme B (protoheme IX) to heme O by substitution of the vinyl group on carbon 2 of heme B porphyrin ring with a hydroxyethyl farnesyl side group. The polypeptide is Protoheme IX farnesyltransferase (Exiguobacterium sibiricum (strain DSM 17290 / CCUG 55495 / CIP 109462 / JCM 13490 / 255-15)).